The primary structure comprises 167 residues: Putative peroxiredoxin-A (167 aa).

The Thioredoxin domain maps to 4-167 (IKRGDRFPTT…STAQKIIAKL (164 aa)). Cysteine 53 acts as the Cysteine sulfenic acid (-SOH) intermediate in catalysis. Residues 165 to 167 (AKL) carry the Microbody targeting signal motif.

It belongs to the peroxiredoxin family. Prx5 subfamily.

It localises to the peroxisome membrane. The catalysed reaction is a hydroperoxide + [thioredoxin]-dithiol = an alcohol + [thioredoxin]-disulfide + H2O. Thiol-specific peroxidase that catalyzes the reduction of hydrogen peroxide and organic hydroperoxides to water and alcohols, respectively. Plays a role in cell protection against oxidative stress by detoxifying peroxides and as sensor of hydrogen peroxide-mediated signaling events. In Candida boidinii (Yeast), this protein is Putative peroxiredoxin-A (PMPA).